The sequence spans 506 residues: AMP phosphorylase (506 aa).

Residues G167, 193 to 198 (SRAITG), and T202 contribute to the AMP site. D255 (proton donor) is an active-site residue. S263 and K287 together coordinate AMP.

The protein belongs to the thymidine/pyrimidine-nucleoside phosphorylase family. Type 2 subfamily.

It catalyses the reaction AMP + phosphate = alpha-D-ribose 1,5-bisphosphate + adenine. The enzyme catalyses CMP + phosphate = cytosine + alpha-D-ribose 1,5-bisphosphate. The catalysed reaction is UMP + phosphate = alpha-D-ribose 1,5-bisphosphate + uracil. Catalyzes the conversion of AMP and phosphate to adenine and ribose 1,5-bisphosphate (R15P). Exhibits phosphorylase activity toward CMP and UMP in addition to AMP. Functions in an archaeal AMP degradation pathway, together with R15P isomerase and RubisCO. The polypeptide is AMP phosphorylase (Methanosarcina acetivorans (strain ATCC 35395 / DSM 2834 / JCM 12185 / C2A)).